We begin with the raw amino-acid sequence, 644 residues long: CTP synthase (644 aa).

Residues 300–551 enclose the Glutamine amidotransferase type-1 domain; the sequence is SIAIVGKYTK…LGLILASVDR (252 aa). Residues Cys399, His527, and Glu529 each act as for GATase activity in the active site.

It belongs to the CTP synthase family.

It carries out the reaction UTP + L-glutamine + ATP + H2O = CTP + L-glutamate + ADP + phosphate + 2 H(+). Its pathway is pyrimidine metabolism; CTP biosynthesis via de novo pathway; CTP from UDP: step 2/2. Catalyzes the ATP-dependent amination of UTP to CTP with either L-glutamine or ammonia as the source of nitrogen. Constitutes the rate-limiting enzyme in the synthesis of cytosine nucleotides. The polypeptide is CTP synthase (Drosophila pseudoobscura pseudoobscura (Fruit fly)).